The sequence spans 466 residues: Alpha-1A adrenergic receptor (466 aa).

The Extracellular portion of the chain corresponds to 1-27 (MVLLSENASEGSNCTHPPAPVNISKAI). N-linked (GlcNAc...) asparagine glycans are attached at residues asparagine 7, asparagine 13, and asparagine 22. A helical transmembrane segment spans residues 28–51 (LLGVILGGLIIFGVLGNILVILSV). The Cytoplasmic portion of the chain corresponds to 52–64 (ACHRHLHSVTHYY). Residues 65 to 88 (IVNLAVADLLLTSTVLPFSAIFEI) form a helical membrane-spanning segment. Residues 89–99 (LGYWAFGRVFC) are Extracellular-facing. A disulfide bridge links cysteine 99 with cysteine 176. Residues 100–122 (NIWAAVDVLCCTASIMGLCIISI) form a helical membrane-spanning segment. Topologically, residues 123-143 (DRYIGVSYPLRYPTIVTQRRG) are cytoplasmic. Residues 144 to 167 (VRALLCVWVLSLVISIGPLFGWRQ) form a helical membrane-spanning segment. Over 168–181 (PAPEDETICQINEE) the chain is Extracellular. The chain crosses the membrane as a helical span at residues 182–205 (PGYVLFSALGSFYVPLAIILVMYC). The Cytoplasmic portion of the chain corresponds to 206–273 (RVYVVAKRES…FSREKKAAKT (68 aa)). Serine 215 carries the post-translational modification Phosphoserine; by PKA. A helical membrane pass occupies residues 274–297 (LGIVVGCFVLCWLPFFLVMPIGSF). The Extracellular segment spans residues 298-305 (FPDFKPSE). A helical transmembrane segment spans residues 306-329 (TVFKIVFWLGYLNSCINPIIYPCS). Residues 330 to 466 (SQEFKKAFQN…ISLGENGEEV (137 aa)) lie on the Cytoplasmic side of the membrane. The Nuclear localization signal motif lies at 334–349 (KKAFQNVLRIQCLRRR). Cysteine 345 carries S-palmitoyl cysteine lipidation.

This sequence belongs to the G-protein coupled receptor 1 family. Adrenergic receptor subfamily. ADRA1A sub-subfamily. In terms of assembly, homo- and heterooligomer. Heterooligomerizes with ADRA1B homooligomers in cardiac myocytes. Interacts with CAVIN4. C-terminal Ser or Thr residues may be phosphorylated. In terms of tissue distribution, abundant in heart, brain, aorta, vena cava, vas deferens, submaxillary gland, lung, and kidney. Found at lower levels in prostate, parotid gland and skeletal muscle.

It is found in the nucleus membrane. The protein localises to the cell membrane. Its subcellular location is the cytoplasm. It localises to the membrane. The protein resides in the caveola. In terms of biological role, this alpha-adrenergic receptor mediates its action by association with G proteins that activate a phosphatidylinositol-calcium second messenger system. Its effect is mediated by G(q) and G(11) proteins. Nuclear ADRA1A-ADRA1B heterooligomers regulate phenylephrine (PE)-stimulated ERK signaling in cardiac myocytes. This is Alpha-1A adrenergic receptor (Adra1a) from Rattus norvegicus (Rat).